Here is a 406-residue protein sequence, read N- to C-terminus: Putative ankyrin repeat protein RF_0266 (406 aa).

5 ANK repeats span residues 68-98, 103-129, 130-161, 163-189, and 203-232; these read TSHS…DINN, NYIT…QDDI, KVQN…IIKP, HIEL…DIEK, and SIDC…KPEQ.

The sequence is that of Putative ankyrin repeat protein RF_0266 from Rickettsia felis (strain ATCC VR-1525 / URRWXCal2) (Rickettsia azadi).